A 132-amino-acid polypeptide reads, in one-letter code: NADH-quinone oxidoreductase subunit A 2 (132 aa).

A run of 3 helical transmembrane segments spans residues 10 to 30 (WALL…LGLG), 66 to 86 (LVAM…LWAV), and 93 to 113 (WAGF…LFYL).

This sequence belongs to the complex I subunit 3 family. NDH-1 is composed of 13 different subunits. Subunits NuoA, H, J, K, L, M, N constitute the membrane sector of the complex.

It is found in the cell inner membrane. The catalysed reaction is a quinone + NADH + 5 H(+)(in) = a quinol + NAD(+) + 4 H(+)(out). In terms of biological role, NDH-1 shuttles electrons from NADH, via FMN and iron-sulfur (Fe-S) centers, to quinones in the respiratory chain. The immediate electron acceptor for the enzyme in this species is believed to be ubiquinone. Couples the redox reaction to proton translocation (for every two electrons transferred, four hydrogen ions are translocated across the cytoplasmic membrane), and thus conserves the redox energy in a proton gradient. The protein is NADH-quinone oxidoreductase subunit A 2 of Pseudomonas aeruginosa (strain UCBPP-PA14).